The primary structure comprises 314 residues: GMP synthase [glutamine-hydrolyzing] subunit B (314 aa).

The GMPS ATP-PPase domain occupies 2 to 186 (FDPKKFVEEA…LGIPDEIVER (185 aa)). Residue 29–35 (SGGVDST) coordinates ATP.

As to quaternary structure, heterodimer composed of a glutamine amidotransferase subunit (A) and a GMP-binding subunit (B).

The catalysed reaction is XMP + L-glutamine + ATP + H2O = GMP + L-glutamate + AMP + diphosphate + 2 H(+). Its pathway is purine metabolism; GMP biosynthesis; GMP from XMP (L-Gln route): step 1/1. Its function is as follows. Catalyzes the synthesis of GMP from XMP. In Methanopyrus kandleri (strain AV19 / DSM 6324 / JCM 9639 / NBRC 100938), this protein is GMP synthase [glutamine-hydrolyzing] subunit B (guaAB).